We begin with the raw amino-acid sequence, 1178 residues long: DNA-directed RNA polymerase subunit beta' (1178 aa).

Zn(2+)-binding residues include C60, C62, C75, and C78. Mg(2+) is bound by residues D450, D452, and D454. Positions 795, 869, 876, and 879 each coordinate Zn(2+).

This sequence belongs to the RNA polymerase beta' chain family. In terms of assembly, the RNAP catalytic core consists of 2 alpha, 1 beta, 1 beta' and 1 omega subunit. When a sigma factor is associated with the core the holoenzyme is formed, which can initiate transcription. Mg(2+) is required as a cofactor. Zn(2+) serves as cofactor.

It carries out the reaction RNA(n) + a ribonucleoside 5'-triphosphate = RNA(n+1) + diphosphate. Functionally, DNA-dependent RNA polymerase catalyzes the transcription of DNA into RNA using the four ribonucleoside triphosphates as substrates. This chain is DNA-directed RNA polymerase subunit beta', found in Clostridium perfringens (strain ATCC 13124 / DSM 756 / JCM 1290 / NCIMB 6125 / NCTC 8237 / Type A).